We begin with the raw amino-acid sequence, 436 residues long: Trigger factor (436 aa).

The PPIase FKBP-type domain maps to 161–248 (TDRVTIDLYG…LKKVEQYRLP (88 aa)).

This sequence belongs to the FKBP-type PPIase family. Tig subfamily.

The protein localises to the cytoplasm. The catalysed reaction is [protein]-peptidylproline (omega=180) = [protein]-peptidylproline (omega=0). Its function is as follows. Involved in protein export. Acts as a chaperone by maintaining the newly synthesized protein in an open conformation. Functions as a peptidyl-prolyl cis-trans isomerase. This is Trigger factor from Baumannia cicadellinicola subsp. Homalodisca coagulata.